Consider the following 501-residue polypeptide: Solute carrier family 2, facilitated glucose transporter member 5 (501 aa).

N-acetylmethionine is present on M1. Residues 1–18 (MEPQDPVKREGRLTPVIV) are Cytoplasmic-facing. The helical transmembrane segment at 19–39 (LATLIAAFGSSFQYGYNVAAI) threads the bilayer. Y32 contributes to the D-fructose binding site. Residues 40-68 (NSPSEFMKDFYNYTYYDRVGEYMNEFYLT) are Extracellular-facing. N51 carries an N-linked (GlcNAc...) asparagine glycan. A helical membrane pass occupies residues 69-91 (LLWSVTVSMFPFGGFLGSLMVGP). Over 92-98 (LVNNLGR) the chain is Cytoplasmic. A helical membrane pass occupies residues 99 to 119 (KGTLLFNNIFSIVPALLMGFS). Topologically, residues 120–126 (ELAKSFE) are extracellular. A helical transmembrane segment spans residues 127 to 149 (MIIVARVLVGICAGLSSNVVPMY). At 150-161 (LGELAPKNWRGA) the chain is on the cytoplasmic side. A helical transmembrane segment spans residues 162–182 (LGVVPQLFITIGILVAQIFGL). Residue Q167 participates in D-fructose binding. Residues 183 to 192 (RSLLANEEGW) are Extracellular-facing. The chain crosses the membrane as a helical span at residues 193–213 (PILLGLTGIPAVLQLLFLPFF). The Cytoplasmic portion of the chain corresponds to 214–277 (PESPRYLLIQ…LFKMRSLRWQ (64 aa)). Residues 278–298 (VISIIVLMAGQQLSGVNAIYY) form a helical membrane-spanning segment. Residues Q288 and 296-298 (IYY) contribute to the D-fructose site. Residues 299–313 (YADQIYLSAGVNEDD) are Extracellular-facing. A helical membrane pass occupies residues 314 to 334 (VQYVTAGTGAVNVLITVCAIF). The Cytoplasmic portion of the chain corresponds to 335-342 (VVELMGRR). The helical transmembrane segment at 343–363 (FLLLLGFSVCFTACCVLTGAL) threads the bilayer. At 364–371 (ALQDVISW) the chain is on the extracellular side. A helical transmembrane segment spans residues 372 to 394 (MPYVSIACVISYVIGHALGPSPI). D-fructose is bound at residue H387. Residues 395–412 (PALLVTEIFLQSSRPAAY) are Cytoplasmic-facing. The helical transmembrane segment at 413–433 (MVAGTVHWLSNFTVGLVFPFI) threads the bilayer. Position 419–420 (419–420 (HW)) interacts with D-fructose. Over 434 to 439 (QVGLGA) the chain is Extracellular. Residues 440–460 (YSFVIFAVICLLTTVYIFLII) traverse the membrane as a helical segment. Over 461 to 501 (PETKSKTFIEINRIFIKMNKVPGVHPEKEELKEFPPSTARQ) the chain is Cytoplasmic.

Belongs to the major facilitator superfamily. Sugar transporter (TC 2.A.1.1) family. Glucose transporter subfamily.

The protein resides in the apical cell membrane. It localises to the cell membrane. Its subcellular location is the sarcolemma. It catalyses the reaction D-fructose(out) = D-fructose(in). Functions as a fructose transporter that has only low activity with other monosaccharides. Can mediate the uptake of deoxyglucose, but with low efficiency. Essential for fructose uptake in the small intestine. Plays a role in the regulation of salt uptake and blood pressure in response to dietary fructose. Required for the development of high blood pressure in response to high dietary fructose intake. This is Solute carrier family 2, facilitated glucose transporter member 5 from Bos taurus (Bovine).